Reading from the N-terminus, the 832-residue chain is MRKLPLFMAWKFWLICLYIIKVASTQIVIKSNTIVGGNNPSGFQNGYIVSGDAFLAFQDMNTVPMYQTVRIDKGGALYYINNDKQGFSILSDHNYNHPFVFLNEGTVVVDDRRSISPGSWTIKDGSFTNNGNIMFTSSQGDIFSIGSNYITNTGFIFSKGTSFEKPQRLQIGNGNIWINTGTVCMANTTYILENAIQGGGCISVGENSVFNIYSFDMQQQTVYLSHPSSVLILNGGHEVPVYGLGNGNGILYPDAPIRDIYYDSSTGIMDVTAGTNGIYKFTVYIGAGYNESNFEIVSSIKIHGISYDNYNFVRYRGPPPNLAPSVCQPCVEIPLYSFQVPDPYTTTNELGFSETVSFYSTYNENDIPVIGNTTIYVPPAIYTLTKVNENTTETDIISRVTGMGYNGLPFTYYTTITVGEMETGVVTKTITITENKSRSTKTTLMSRNYTFSFSNYSPISSSGTYSVSTVDNITTLTDTVANVSSSGPNSIVTATMTTYQNNHEFNNASVINVTNSSNIMVPITSTFYSSVDSNLTTPITSLTRTSQSQIVSHITKLASSINETTIANTFPSPAASGTNYTTVVTNAEGSVQTDIVSHITTTDSDGKPTTIVSHITTTDSDGKPTTIVTTFPAPAASGADYTTVVTNADGSVETDIVSHITTKDSIGKPTTVVTTVPYTLCASNADYTTVVTKSNVSVETEVVSHITTTAPCSDLESHVENQTTSPSMHTTSLVGSENGVSAKTVNDKPNPTIFTEVAVSEGTTSNAGYVTDQGSSLEMFAPTGASAVESGNKVSQTQTASIFHGAGSTFKIKFNTILLSTSLTILILLGMA.

The first 25 residues, 1-25 (MRKLPLFMAWKFWLICLYIIKVAST), serve as a signal peptide directing secretion. N-linked (GlcNAc...) asparagine glycosylation is found at Asn187, Asn290, Asn372, Asn390, Asn435, Asn448, Asn472, Asn482, Asn507, Asn512, Asn515, Asn534, Asn562, Asn579, Asn695, and Asn721. The segment at 722–747 (QTTSPSMHTTSLVGSENGVSAKTVND) is disordered.

The protein resides in the secreted. It is found in the cell wall. In terms of biological role, mediates cell-substrate adhesion and promotes biofilm formation. The polypeptide is Adhesin AWP2 (Candida glabrata (strain ATCC 2001 / BCRC 20586 / JCM 3761 / NBRC 0622 / NRRL Y-65 / CBS 138) (Yeast)).